The primary structure comprises 114 residues: MAKSLRSKWKRKMRAEKRKKNAPKELERLKSILRTGADVVMEEVKEVATVLPAKEALEKQDDCKMDVDNKRNKKTLLDQHGQYPIWMNSRQRKKLKAQRLKGKKKSKLPKGLAW.

Composition is skewed to basic residues over residues 1-21 (MAKS…RKKN) and 91-108 (QRKK…KSKL). Disordered regions lie at residues 1–23 (MAKS…KNAP) and 91–114 (QRKK…GLAW).

Belongs to the learning-associated protein family.

It localises to the nucleus. It is found in the nucleolus. The protein resides in the chromosome. Its function is as follows. Regulates dendritic and spine growth and synaptic transmission. This chain is Protein LLP homolog (LLPH), found in Gallus gallus (Chicken).